The sequence spans 402 residues: MGIKSLDDLLAEGVSGRGVLVRSDLNVPLDGGSITDPGRIIASVPTLKALSDAGAKVVVTAHLGRPKGEPDPKFSLAPVGAALGEKLGRHVQLAGDVVGSDALARAEGLTDGDILLLENIRFDGRETSKDDAERLKLAKALVELVGDDGAFVSDGFGVVHRKQASVYDVATLLPHYAGTLVDTEVKVLAQLTESTERPYAVVLGGSKVSDKLAVIENLATKADSLIIGGGMCFTFLAAQGLSVGSSLLEESMIDTCRTLLDDYGDVLHLPVDIVVAEKFSADSEPQTVAADKIPDDKMGLDIGPESVRRFSALLSNAKTIFWNGPMGVFEFPAFAAGTKGVAEAIIGATGKGAFSVVGGGDSAAAVRQLGLPEDGFSHISTGGGASLEYLEGKELPGIEVLN.

Substrate-binding positions include 24–26 (DLN), Arg-39, 62–65 (HLGR), Arg-121, and Arg-161. ATP is bound by residues Lys-211, Gly-299, Glu-330, and 359-362 (GGDS).

It belongs to the phosphoglycerate kinase family. In terms of assembly, monomer.

The protein resides in the cytoplasm. The enzyme catalyses (2R)-3-phosphoglycerate + ATP = (2R)-3-phospho-glyceroyl phosphate + ADP. The protein operates within carbohydrate degradation; glycolysis; pyruvate from D-glyceraldehyde 3-phosphate: step 2/5. This Mycolicibacterium gilvum (strain PYR-GCK) (Mycobacterium gilvum (strain PYR-GCK)) protein is Phosphoglycerate kinase.